The primary structure comprises 361 residues: Phosphoserine aminotransferase (361 aa).

Arg-43 contacts L-glutamate. Pyridoxal 5'-phosphate contacts are provided by residues 77-78, Trp-103, Thr-153, Asp-173, and Gln-196; that span reads AS. At Lys-197 the chain carries N6-(pyridoxal phosphate)lysine. 238-239 lines the pyridoxal 5'-phosphate pocket; it reads NT.

This sequence belongs to the class-V pyridoxal-phosphate-dependent aminotransferase family. SerC subfamily. In terms of assembly, homodimer. Requires pyridoxal 5'-phosphate as cofactor.

The protein resides in the cytoplasm. It catalyses the reaction O-phospho-L-serine + 2-oxoglutarate = 3-phosphooxypyruvate + L-glutamate. The enzyme catalyses 4-(phosphooxy)-L-threonine + 2-oxoglutarate = (R)-3-hydroxy-2-oxo-4-phosphooxybutanoate + L-glutamate. The protein operates within amino-acid biosynthesis; L-serine biosynthesis; L-serine from 3-phospho-D-glycerate: step 2/3. It participates in cofactor biosynthesis; pyridoxine 5'-phosphate biosynthesis; pyridoxine 5'-phosphate from D-erythrose 4-phosphate: step 3/5. Its function is as follows. Catalyzes the reversible conversion of 3-phosphohydroxypyruvate to phosphoserine and of 3-hydroxy-2-oxo-4-phosphonooxybutanoate to phosphohydroxythreonine. In Pseudomonas syringae pv. tomato (strain ATCC BAA-871 / DC3000), this protein is Phosphoserine aminotransferase.